The chain runs to 198 residues: Nucleoid occlusion factor SlmA (198 aa).

In terms of domain architecture, HTH tetR-type spans 10–70 (NRREEILQSL…SLIEFIEDSL (61 aa)). The segment at residues 33–52 (TTAKLAASVGVSEAALYRHF) is a DNA-binding region (H-T-H motif). Residues 117–144 (EQDRLQGRINQLFERIEAQLRQVLREKR) are a coiled coil.

It belongs to the nucleoid occlusion factor SlmA family. In terms of assembly, homodimer. Interacts with FtsZ.

It localises to the cytoplasm. Its subcellular location is the nucleoid. Its function is as follows. Required for nucleoid occlusion (NO) phenomenon, which prevents Z-ring formation and cell division over the nucleoid. Acts as a DNA-associated cell division inhibitor that binds simultaneously chromosomal DNA and FtsZ, and disrupts the assembly of FtsZ polymers. SlmA-DNA-binding sequences (SBS) are dispersed on non-Ter regions of the chromosome, preventing FtsZ polymerization at these regions. This is Nucleoid occlusion factor SlmA from Escherichia coli O45:K1 (strain S88 / ExPEC).